The sequence spans 170 residues: Large ribosomal subunit protein uL22c (170 aa).

Belongs to the universal ribosomal protein uL22 family. In terms of assembly, part of the 50S ribosomal subunit.

The protein localises to the plastid. The protein resides in the chloroplast. In terms of biological role, this protein binds specifically to 23S rRNA. Its function is as follows. The globular domain of the protein is located near the polypeptide exit tunnel on the outside of the subunit, while an extended beta-hairpin is found that lines the wall of the exit tunnel in the center of the 70S ribosome. This is Large ribosomal subunit protein uL22c (rpl22) from Nandina domestica (Heavenly bamboo).